The sequence spans 289 residues: MESLQDRAALLAWRKRQGHQNIGFVPTMGCLHEGHLTLLREARQRCEQVVVSIFVNPTQFGPNEDFDLYPRTFEADWALLEAEGCDALFHPTVAAIYPPENPNLTHVTLPALAGMLCGAVRPGHFDGVATVVTLLLNLVRPTSAFFGLKDYQQFTVLRSMVQDLAMPVEVIGIPTVREPDGLAMSSRNRYLDAPARAQAVALSQGLNRAYHAYQEGLHDATALAHLVEQTLRQAGIARIDYVAVRDALTLQPWQGKGAPVVLIAAHVGAARLIDNLVLGAQPIPSVTQE.

Residue 28–35 (MGCLHEGH) coordinates ATP. Histidine 35 (proton donor) is an active-site residue. Glutamine 59 contributes to the (R)-pantoate binding site. Glutamine 59 is a beta-alanine binding site. 147–150 (GLKD) lines the ATP pocket. Position 153 (glutamine 153) interacts with (R)-pantoate. Residues valine 176 and 184 to 187 (MSSR) each bind ATP.

The protein belongs to the pantothenate synthetase family. In terms of assembly, homodimer.

It localises to the cytoplasm. It carries out the reaction (R)-pantoate + beta-alanine + ATP = (R)-pantothenate + AMP + diphosphate + H(+). Its pathway is cofactor biosynthesis; (R)-pantothenate biosynthesis; (R)-pantothenate from (R)-pantoate and beta-alanine: step 1/1. Functionally, catalyzes the condensation of pantoate with beta-alanine in an ATP-dependent reaction via a pantoyl-adenylate intermediate. In Magnetococcus marinus (strain ATCC BAA-1437 / JCM 17883 / MC-1), this protein is Pantothenate synthetase.